The chain runs to 179 residues: Acireductone dioxygenase (179 aa).

Residues methionine 1–glutamine 21 form a disordered region. Residues histidine 88, histidine 90, glutamate 94, and histidine 133 each coordinate Fe(2+). 4 residues coordinate Ni(2+): histidine 88, histidine 90, glutamate 94, and histidine 133.

Belongs to the acireductone dioxygenase (ARD) family. In terms of assembly, monomer. Interacts with MMP14. It depends on Fe(2+) as a cofactor. Ni(2+) is required as a cofactor.

Its subcellular location is the cytoplasm. It is found in the nucleus. The protein resides in the cell membrane. It carries out the reaction 1,2-dihydroxy-5-(methylsulfanyl)pent-1-en-3-one + O2 = 4-methylsulfanyl-2-oxobutanoate + formate + 2 H(+). It catalyses the reaction 1,2-dihydroxy-5-(methylsulfanyl)pent-1-en-3-one + O2 = 3-(methylsulfanyl)propanoate + CO + formate + 2 H(+). Its pathway is amino-acid biosynthesis; L-methionine biosynthesis via salvage pathway; L-methionine from S-methyl-5-thio-alpha-D-ribose 1-phosphate: step 5/6. In terms of biological role, catalyzes 2 different reactions between oxygen and the acireductone 1,2-dihydroxy-3-keto-5-methylthiopentene (DHK-MTPene) depending upon the metal bound in the active site. Fe-containing acireductone dioxygenase (Fe-ARD) produces formate and 2-keto-4-methylthiobutyrate (KMTB), the alpha-ketoacid precursor of methionine in the methionine recycle pathway. Ni-containing acireductone dioxygenase (Ni-ARD) produces methylthiopropionate, carbon monoxide and formate, and does not lie on the methionine recycle pathway. The sequence is that of Acireductone dioxygenase (adi1) from Xenopus tropicalis (Western clawed frog).